A 308-amino-acid chain; its full sequence is Cell division protein FtsQ (308 aa).

The Cytoplasmic segment spans residues 1–53 (MDSGGRIVYALNVEKTGFLRILSVTVLQRLYRRVFWFLFKCVAGIDVPRHAGS). Residues 54–74 (LAVFSFFFLSILYSISSGGYM) traverse the membrane as a helical segment. At 75–308 (NHFMKVAISN…LLKMLKAGSV (234 aa)) the chain is on the periplasmic side. A POTRA domain is found at 87–155 (FLVTHVDMSG…DRLRISLVER (69 aa)).

The protein belongs to the FtsQ/DivIB family. FtsQ subfamily.

It localises to the cell inner membrane. Essential cell division protein. The protein is Cell division protein FtsQ of Bartonella bacilliformis.